The chain runs to 333 residues: Dehydrodolichyl diphosphate synthase complex subunit DHDDS (333 aa).

(2E,6E)-farnesyl diphosphate-binding residues include aspartate 34, glycine 35, arginine 37, arginine 38, and arginine 85. Residues aspartate 34, glycine 35, arginine 37, arginine 38, arginine 85, arginine 205, arginine 211, and serine 213 each coordinate isopentenyl diphosphate. Aspartate 34 provides a ligand contact to Mg(2+).

It belongs to the UPP synthase family. The active dehydrodolichyl diphosphate synthase complex is a heterotetramer composed of a dimer of heterodimer of DHDDS and NUS1. Interacts with NPC2. Mg(2+) is required as a cofactor. In terms of tissue distribution, ubiquitous. Expressed at high levels in testis and kidney. Expressed in epididymis (at protein level).

The protein localises to the endoplasmic reticulum membrane. The catalysed reaction is n isopentenyl diphosphate + (2E,6E)-farnesyl diphosphate = a di-trans,poly-cis-polyprenyl diphosphate + n diphosphate. It functions in the pathway protein modification; protein glycosylation. Its pathway is lipid metabolism. Activated by phospholipids including cardiolipin, phosphatidylcholine, phosphatidylethanolamine, phosphatidylinositol and phosphatidylserine. With NUS1, forms the dehydrodolichyl diphosphate synthase (DDS) complex, an essential component of the dolichol monophosphate (Dol-P) biosynthetic machinery. Both subunits contribute to enzymatic activity, i.e. condensation of multiple copies of isopentenyl pyrophosphate (IPP) to farnesyl pyrophosphate (FPP) to produce dehydrodolichyl diphosphate (Dedol-PP), a precursor of dolichol phosphate which is utilized as a sugar carrier in protein glycosylation in the endoplasmic reticulum (ER). Synthesizes long-chain polyprenols, mostly of C95 and C100 chain length. Regulates the glycosylation and stability of nascent NPC2, thereby promoting trafficking of LDL-derived cholesterol. The sequence is that of Dehydrodolichyl diphosphate synthase complex subunit DHDDS from Homo sapiens (Human).